The primary structure comprises 1140 residues: DNA damage-binding protein 1 (1140 aa).

Ser2 carries the post-translational modification N-acetylserine. The segment at 2–768 (SYNYVVTAQK…QALSSSVSSS (767 aa)) is interaction with CDT1. The interval 13–356 (TAVNGCVTGH…VVAMETFTNL (344 aa)) is WD repeat beta-propeller A. The WD repeat beta-propeller B; Interaction with CUL4A stretch occupies residues 391–708 (RNGIGIHEHA…LTIGTIDEIQ (318 aa)). The interval 709–1043 (KLHIRTVPLY…NGMIGLVTSL (335 aa)) is WD repeat beta-propeller C. Positions 771–1140 (FSSSTAPHET…KVVEELTRIH (370 aa)) are interaction with CDT1 and CUL4A. N6-acetyllysine is present on Lys1067. A Glycyl lysine isopeptide (Lys-Gly) (interchain with G-Cter in SUMO2) cross-link involves residue Lys1121. A Phosphothreonine modification is found at Thr1125.

Belongs to the DDB1 family. In terms of assembly, component of the UV-DDB complex which includes DDB1 and DDB2; the heterodimer dimerizes to give rise to a heterotetramer when bound to damaged DNA. The UV-DDB complex interacts with monoubiquitinated histone H2A and binds to XPC via the DDB2 subunit. Component of numerous DCX (DDB1-CUL4-X-box) E3 ubiquitin-protein ligase complexes which consist of a core of DDB1, CUL4A or CUL4B and RBX1. DDB1 may recruit specific substrate targeting subunits to the DCX complex. These substrate targeting subunits are generally known as DCAF (DDB1- and CUL4-associated factor) or CDW (CUL4-DDB1-associated WD40-repeat) proteins. Interacts with AMBRA1, ATG16L1, BTRC, CRBN, DCAF1, DCAF4, DCAF5, DCAF6, DCAF7, DCAF8, DCAF9, DCAF10, DCAF11, DCAF12, DCAF15, DCAF16, DCAF17, DDA1, DET1, DTL, ERCC8, FBXW5, FBXW8, GRWD1, KATNB1, NLE1, NUP43, PAFAH1B1, PHIP, PWP1, RBBP4, RBBP5, RBBP7, COP1, SNRNP40, DCAF1, WDR5, WDR5B, WDR12, WDR26, WDR39, WDR42, WDR53, WDR59, WDR61, WSB1, WSB2, LRWD1 and WDTC1. DCX complexes may associate with the COP9 signalosome, and this inhibits the E3 ubiquitin-protein ligase activity of the complex. Interacts with NF2, TSC1 and TSC2. Interacts with AGO1 and AGO2. Associates with the E3 ligase complex containing DYRK2, EDD/UBR5, DDB1 and DCAF1 proteins (EDVP complex). Interacts directly with DYRK2. DCX(DTL) complex interacts with FBXO11; does not ubiquitinate and degradate FBXO11. Interacts with TRPC4AP. Interacts with CRY1 and CRY2. The DDB1-CUL4A complex interacts with CRY1. May also interact with DCUN1D1, DCUN1D2, DCUN1D3 and DCUN1D5. Component of the DCX(DCAF13) E3 ubiquitin ligase complex, at least composed of CUL4 (CUL4A or CUL4B), DDB1, DCAF13 and RBX1. Interacts with DCAF13 (via WD40 domain). Post-translationally, phosphorylated by ABL1. Ubiquitinated by CUL4A. Subsequently degraded by ubiquitin-dependent proteolysis. In terms of processing, acetylated, promoting interaction with CUL4 (CUL4A or CUL4B) and subsequent formation of DCX (DDB1-CUL4-X-box) E3 ubiquitin-protein ligase complexes. Deacetylation by SIRT7 impairs the interaction with CUL4 (CUL4A or CUL4B) and formation of DCX (DDB1-CUL4-X-box) E3 ubiquitin-protein ligase complexes.

Its subcellular location is the cytoplasm. The protein resides in the nucleus. The protein operates within protein modification; protein ubiquitination. Its function is as follows. Protein, which is both involved in DNA repair and protein ubiquitination, as part of the UV-DDB complex and DCX (DDB1-CUL4-X-box) complexes, respectively. Core component of the UV-DDB complex (UV-damaged DNA-binding protein complex), a complex that recognizes UV-induced DNA damage and recruit proteins of the nucleotide excision repair pathway (the NER pathway) to initiate DNA repair. The UV-DDB complex preferentially binds to cyclobutane pyrimidine dimers (CPD), 6-4 photoproducts (6-4 PP), apurinic sites and short mismatches. Also functions as a component of numerous distinct DCX (DDB1-CUL4-X-box) E3 ubiquitin-protein ligase complexes which mediate the ubiquitination and subsequent proteasomal degradation of target proteins. The functional specificity of the DCX E3 ubiquitin-protein ligase complex is determined by the variable substrate recognition component recruited by DDB1. DCX(DDB2) (also known as DDB1-CUL4-ROC1, CUL4-DDB-ROC1 and CUL4-DDB-RBX1) may ubiquitinate histone H2A, histone H3 and histone H4 at sites of UV-induced DNA damage. The ubiquitination of histones may facilitate their removal from the nucleosome and promote subsequent DNA repair. DCX(DDB2) also ubiquitinates XPC, which may enhance DNA-binding by XPC and promote NER. DCX(DTL) plays a role in PCNA-dependent polyubiquitination of CDT1 and MDM2-dependent ubiquitination of TP53 in response to radiation-induced DNA damage and during DNA replication. DCX(ERCC8) (the CSA complex) plays a role in transcription-coupled repair (TCR). The DDB1-CUL4A-DTL E3 ligase complex regulates the circadian clock function by mediating the ubiquitination and degradation of CRY1. DDB1-mediated CRY1 degradation promotes FOXO1 protein stability and FOXO1-mediated gluconeogenesis in the liver. By acting on TET dioxygenses, essential for oocyte maintenance at the primordial follicle stage, hence essential for female fertility. Maternal factor required for proper zygotic genome activation and genome reprogramming. The chain is DNA damage-binding protein 1 (DDB1) from Bos taurus (Bovine).